Reading from the N-terminus, the 316-residue chain is Ferrochelatase (316 aa).

Fe cation is bound by residues His186 and Glu268.

It belongs to the ferrochelatase family.

The protein resides in the cytoplasm. The catalysed reaction is heme b + 2 H(+) = protoporphyrin IX + Fe(2+). It participates in porphyrin-containing compound metabolism; protoheme biosynthesis; protoheme from protoporphyrin-IX: step 1/1. Its function is as follows. Catalyzes the ferrous insertion into protoporphyrin IX. In Deinococcus radiodurans (strain ATCC 13939 / DSM 20539 / JCM 16871 / CCUG 27074 / LMG 4051 / NBRC 15346 / NCIMB 9279 / VKM B-1422 / R1), this protein is Ferrochelatase.